Here is a 368-residue protein sequence, read N- to C-terminus: DNA replication and repair protein RecF (368 aa).

Position 30-37 (glycine 30–threonine 37) interacts with ATP.

The protein belongs to the RecF family.

Its subcellular location is the cytoplasm. Its function is as follows. The RecF protein is involved in DNA metabolism; it is required for DNA replication and normal SOS inducibility. RecF binds preferentially to single-stranded, linear DNA. It also seems to bind ATP. The chain is DNA replication and repair protein RecF from Streptococcus pyogenes serotype M4 (strain MGAS10750).